Here is a 391-residue protein sequence, read N- to C-terminus: S-adenosylmethionine synthase (391 aa).

H16 contacts ATP. Position 18 (D18) interacts with Mg(2+). Residue E44 coordinates K(+). L-methionine contacts are provided by E57 and Q101. The tract at residues 101–111 is flexible loop; that stretch reads QSADIAQGVDA. ATP is bound by residues 166–168, D244, 250–251, A267, and K271; these read DAK and RK. L-methionine is bound at residue D244. Residue K275 coordinates L-methionine.

It belongs to the AdoMet synthase family. In terms of assembly, homotetramer; dimer of dimers. Mg(2+) serves as cofactor. It depends on K(+) as a cofactor.

The protein localises to the cytoplasm. The catalysed reaction is L-methionine + ATP + H2O = S-adenosyl-L-methionine + phosphate + diphosphate. It participates in amino-acid biosynthesis; S-adenosyl-L-methionine biosynthesis; S-adenosyl-L-methionine from L-methionine: step 1/1. In terms of biological role, catalyzes the formation of S-adenosylmethionine (AdoMet) from methionine and ATP. The overall synthetic reaction is composed of two sequential steps, AdoMet formation and the subsequent tripolyphosphate hydrolysis which occurs prior to release of AdoMet from the enzyme. The polypeptide is S-adenosylmethionine synthase (Zymomonas mobilis subsp. mobilis (strain ATCC 31821 / ZM4 / CP4)).